A 401-amino-acid chain; its full sequence is Protein IQ-DOMAIN 24 (401 aa).

Residues 1-48 (MGFFGRLFGSKKQEKATPNRRRWSFATRSSHPENDSSSHSSKRRGDED) are disordered. The interval 105-121 (EYKAAMKIQSAFRGYLA) is calmodulin-binding. IQ domains follow at residues 105-133 (EYKAAMKIQSAFRGYLARRALRALKALVK) and 134-156 (LQALVKGHIVRKQTADMLRRMQT). Low complexity-rich tracts occupy residues 165–176 (RASRSSHVSDSS) and 278–287 (RSRTGSSSGG). Disordered regions lie at residues 165–186 (RASRSSHVSDSSHPPTLMIPSS) and 258–296 (SPRKRGSLVVPTSVENSPQLRSRTGSSSGGSRRKTPFTP).

The protein belongs to the IQD family. Binds to multiple calmodulin (CaM) in the presence of Ca(2+) and CaM-like proteins.

The protein resides in the nucleus. Its subcellular location is the nuclear body. It is found in the cell membrane. Functionally, may be involved in cooperative interactions with calmodulins or calmodulin-like proteins. Recruits calmodulin proteins to microtubules, thus being a potential scaffold in cellular signaling and trafficking. May associate with nucleic acids and regulate gene expression at the transcriptional or post-transcriptional level. This is Protein IQ-DOMAIN 24 from Arabidopsis thaliana (Mouse-ear cress).